A 344-amino-acid chain; its full sequence is L-rhamnose-proton symporter (344 aa).

Helical transmembrane passes span 5–25, 38–58, 72–92, 101–121, 137–157, 175–195, 214–234, 259–279, 289–309, and 323–343; these read ILLG…FYAP, WAIA…YWLL, ILLP…GYGL, MGIG…TPII, TLIG…AGLL, LALA…MSAA, LPSY…FCII, ILFS…YAWG, FMSW…VGLL, and VLCI…LGMA.

This sequence belongs to the L-rhamnose transporter (TC 2.A.7.6) family.

The protein localises to the cell inner membrane. The enzyme catalyses L-rhamnopyranose(in) + H(+)(in) = L-rhamnopyranose(out) + H(+)(out). Its function is as follows. Uptake of L-rhamnose across the cytoplasmic membrane with the concomitant transport of protons into the cell (symport system). This is L-rhamnose-proton symporter from Mannheimia succiniciproducens (strain KCTC 0769BP / MBEL55E).